Consider the following 98-residue polypeptide: Co-chaperonin GroES (98 aa).

The protein belongs to the GroES chaperonin family. As to quaternary structure, heptamer of 7 subunits arranged in a ring. Interacts with the chaperonin GroEL.

It is found in the cytoplasm. Together with the chaperonin GroEL, plays an essential role in assisting protein folding. The GroEL-GroES system forms a nano-cage that allows encapsulation of the non-native substrate proteins and provides a physical environment optimized to promote and accelerate protein folding. GroES binds to the apical surface of the GroEL ring, thereby capping the opening of the GroEL channel. This Agrobacterium fabrum (strain C58 / ATCC 33970) (Agrobacterium tumefaciens (strain C58)) protein is Co-chaperonin GroES.